The sequence spans 85 residues: Makatoxin-2 (85 aa).

The N-terminal stretch at 1–19 (MNYLIVISFALLLMTSVES) is a signal peptide. The LCN-type CS-alpha/beta domain maps to 21 to 83 (RDAYIADSEN…VPIRIPGPCR (63 aa)). 4 disulfides stabilise this stretch: cysteine 31/cysteine 82, cysteine 35/cysteine 55, cysteine 41/cysteine 65, and cysteine 45/cysteine 67.

The protein belongs to the long (4 C-C) scorpion toxin superfamily. Sodium channel inhibitor family. Alpha subfamily. In terms of tissue distribution, expressed by the venom gland.

The protein resides in the secreted. This protein markedly relaxes the rat carbachol-precontracted anococcygeus muscle. This relaxation is inhibited by the inhibitor of nitric oxide (NO) synthase, N-nitro-L-arginine methyl ester (L-NAME), suggesting that the response induced by this protein is NO-mediated. The chain is Makatoxin-2 from Olivierus martensii (Manchurian scorpion).